The primary structure comprises 314 residues: Olfactory receptor 9A1 (314 aa).

The Extracellular portion of the chain corresponds to methionine 1–arginine 24. The N-linked (GlcNAc...) asparagine glycan is linked to asparagine 4. Residues isoleucine 25 to isoleucine 45 form a helical membrane-spanning segment. At isoleucine 46–histidine 64 the chain is on the cytoplasmic side. The helical transmembrane segment at leucine 65–leucine 85 threads the bilayer. Residues leucine 86 to alanine 99 are Extracellular-facing. A disulfide bridge connects residues cysteine 97 and cysteine 179. The helical transmembrane segment at glutamine 100–valine 120 threads the bilayer. Over aspartate 121–threonine 140 the chain is Cytoplasmic. The chain crosses the membrane as a helical span at residues phenylalanine 141–tyrosine 161. Residues alanine 162–glutamate 196 lie on the Extracellular side of the membrane. The helical transmembrane segment at phenylalanine 197 to serine 217 threads the bilayer. The Cytoplasmic segment spans residues tyrosine 218 to serine 239. Residues threonine 240–valine 260 traverse the membrane as a helical segment. Topologically, residues lysine 261–asparagine 271 are extracellular. The helical transmembrane segment at arginine 272 to leucine 292 threads the bilayer. Over arginine 293–asparagine 314 the chain is Cytoplasmic.

This sequence belongs to the G-protein coupled receptor 1 family.

It localises to the cell membrane. In terms of biological role, odorant receptor. This Homo sapiens (Human) protein is Olfactory receptor 9A1 (OR9A1P).